The primary structure comprises 67 residues: ATP synthase F(0) complex subunit 8 (67 aa).

The chain crosses the membrane as a helical span at residues 8–24 (TWFITILSMLITLFILF). At K54 the chain carries N6-acetyllysine; alternate. The residue at position 54 (K54) is an N6-succinyllysine; alternate. At K57 the chain carries N6-acetyllysine.

It belongs to the ATPase protein 8 family. Component of the ATP synthase complex composed at least of ATP5F1A/subunit alpha, ATP5F1B/subunit beta, ATP5MC1/subunit c (homooctomer), MT-ATP6/subunit a, MT-ATP8/subunit 8, ATP5ME/subunit e, ATP5MF/subunit f, ATP5MG/subunit g, ATP5MK/subunit k, ATP5MJ/subunit j, ATP5F1C/subunit gamma, ATP5F1D/subunit delta, ATP5F1E/subunit epsilon, ATP5PF/subunit F6, ATP5PB/subunit b, ATP5PD/subunit d, ATP5PO/subunit OSCP. ATP synthase complex consists of a soluble F(1) head domain (subunits alpha(3) and beta(3)) - the catalytic core - and a membrane F(0) domain - the membrane proton channel (subunits c, a, 8, e, f, g, k and j). These two domains are linked by a central stalk (subunits gamma, delta, and epsilon) rotating inside the F1 region and a stationary peripheral stalk (subunits F6, b, d, and OSCP). Interacts with PRICKLE3.

It localises to the mitochondrion membrane. Subunit 8, of the mitochondrial membrane ATP synthase complex (F(1)F(0) ATP synthase or Complex V) that produces ATP from ADP in the presence of a proton gradient across the membrane which is generated by electron transport complexes of the respiratory chain. ATP synthase complex consist of a soluble F(1) head domain - the catalytic core - and a membrane F(1) domain - the membrane proton channel. These two domains are linked by a central stalk rotating inside the F(1) region and a stationary peripheral stalk. During catalysis, ATP synthesis in the catalytic domain of F(1) is coupled via a rotary mechanism of the central stalk subunits to proton translocation. In vivo, can only synthesize ATP although its ATP hydrolase activity can be activated artificially in vitro. Part of the complex F(0) domain. This is ATP synthase F(0) complex subunit 8 from Dugong dugon (Dugong).